A 142-amino-acid chain; its full sequence is Large ribosomal subunit protein uL22c (142 aa).

Belongs to the universal ribosomal protein uL22 family. Part of the 50S ribosomal subunit.

Its subcellular location is the plastid. The protein resides in the chloroplast. In terms of biological role, this protein binds specifically to 23S rRNA. Functionally, the globular domain of the protein is located near the polypeptide exit tunnel on the outside of the subunit, while an extended beta-hairpin is found that lines the wall of the exit tunnel in the center of the 70S ribosome. The sequence is that of Large ribosomal subunit protein uL22c (rpl22) from Picea abies (Norway spruce).